We begin with the raw amino-acid sequence, 393 residues long: S-adenosylmethionine synthase 2 (393 aa).

Position 9 (Glu-9) interacts with Mg(2+). ATP is bound at residue His-15. K(+) is bound at residue Glu-43. L-methionine contacts are provided by Glu-56 and Gln-99. ATP-binding positions include 167-169, 235-238, Asp-246, 252-253, Ala-269, Lys-273, and Lys-277; these read DGK, SGRF, and RK. Asp-246 lines the L-methionine pocket. Lys-277 provides a ligand contact to L-methionine.

It belongs to the AdoMet synthase family. Homotetramer. The cofactor is Mn(2+). Mg(2+) is required as a cofactor. Requires Co(2+) as cofactor. It depends on K(+) as a cofactor. In terms of tissue distribution, roots and shoots.

It localises to the cytoplasm. It catalyses the reaction L-methionine + ATP + H2O = S-adenosyl-L-methionine + phosphate + diphosphate. Its pathway is amino-acid biosynthesis; S-adenosyl-L-methionine biosynthesis; S-adenosyl-L-methionine from L-methionine: step 1/1. Catalyzes the formation of S-adenosylmethionine from methionine and ATP. The reaction comprises two steps that are both catalyzed by the same enzyme: formation of S-adenosylmethionine (AdoMet) and triphosphate, and subsequent hydrolysis of the triphosphate. The sequence is that of S-adenosylmethionine synthase 2 (SAMS2) from Pinus contorta (Shore pine).